The following is a 61-amino-acid chain: MAVPKRKTSPSKRGMRRSADALKAPTYIEDKNSGELRRPHHIDLKTGMYRGRQVLTPKENA.

The span at 1–16 (MAVPKRKTSPSKRGMR) shows a compositional bias: basic residues. The disordered stretch occupies residues 1–39 (MAVPKRKTSPSKRGMRRSADALKAPTYIEDKNSGELRRP). The segment covering 28–39 (IEDKNSGELRRP) has biased composition (basic and acidic residues).

This sequence belongs to the bacterial ribosomal protein bL32 family.

This chain is Large ribosomal subunit protein bL32, found in Rhizobium meliloti (strain 1021) (Ensifer meliloti).